The primary structure comprises 114 residues: uncharacterized protein (114 aa).

Residues Cys-40, Cys-106, and Cys-108 each coordinate Fe cation.

Belongs to the HesB/IscA family. Ycf83 subfamily.

The protein resides in the plastid. It is found in the chloroplast. This is an uncharacterized protein from Pyropia yezoensis (Susabi-nori).